The chain runs to 268 residues: Putative ABC transporter ATP-binding protein LMOf2365_1216 (268 aa).

The ABC transporter domain maps to 2–237 (LKTEHISFQY…KSNVEQAGLV (236 aa)). 35 to 42 (GANGSGKS) is a binding site for ATP.

Belongs to the ABC transporter superfamily.

It localises to the cell membrane. Probably part of an ABC transporter complex. Responsible for energy coupling to the transport system. This chain is Putative ABC transporter ATP-binding protein LMOf2365_1216, found in Listeria monocytogenes serotype 4b (strain F2365).